We begin with the raw amino-acid sequence, 401 residues long: Bone morphogenetic protein 4 (401 aa).

Positions 1–19 are cleaved as a signal peptide; sequence MIPGNRMLMVILLSQVLLG. Positions 20-287 are excised as a propeptide; it reads GTNYASLIPD…GHALTRRSKR (268 aa). 3 N-linked (GlcNAc...) asparagine glycosylation sites follow: asparagine 141, asparagine 204, and asparagine 238. Residues 279-299 are disordered; sequence HALTRRSKRSPKQQRPRKKNK. Residues 280–299 are compositionally biased toward basic residues; it reads ALTRRSKRSPKQQRPRKKNK. Disulfide bonds link cysteine 301-cysteine 366, cysteine 330-cysteine 398, and cysteine 334-cysteine 400. Residues asparagine 343 and asparagine 358 are each glycosylated (N-linked (GlcNAc...) asparagine).

The protein belongs to the TGF-beta family. Homodimer; disulfide-linked. Forms heterodimers with the TGF-beta family member derriere. Part of a complex consisting of twsg1 and chrd. Interacts with tsku.

The protein resides in the secreted. It is found in the extracellular space. It localises to the extracellular matrix. Posterior-ventralizing factor in Xenopus mesoderm induction. Induces posteroventral mesoderm and counteracts dorsalizing signals such as activin. This is Bone morphogenetic protein 4 (bmp4) from Xenopus laevis (African clawed frog).